The following is a 59-amino-acid chain: DNA gyrase inhibitor YacG (59 aa).

C7, C10, C25, and C29 together coordinate Zn(2+).

Belongs to the DNA gyrase inhibitor YacG family. In terms of assembly, interacts with GyrB. Zn(2+) is required as a cofactor.

Inhibits all the catalytic activities of DNA gyrase by preventing its interaction with DNA. Acts by binding directly to the C-terminal domain of GyrB, which probably disrupts DNA binding by the gyrase. The protein is DNA gyrase inhibitor YacG of Geobacter sulfurreducens (strain ATCC 51573 / DSM 12127 / PCA).